A 240-amino-acid polypeptide reads, in one-letter code: Nudix hydrolase 3 (240 aa).

Positions N50–D190 constitute a Nudix hydrolase domain. The short motif at G89 to G110 is the Nudix box element. Positions 104 and 108 each coordinate Mg(2+).

It belongs to the Nudix hydrolase family. PCD1 subfamily. It depends on Mn(2+) as a cofactor. Mg(2+) serves as cofactor.

Probably mediates the hydrolysis of some nucleoside diphosphate derivatives. This Caenorhabditis elegans protein is Nudix hydrolase 3 (ndx-3).